We begin with the raw amino-acid sequence, 479 residues long: MASSYKMSEQSTTSEHILQKTCDHLILTNRSGLETDSVAEEMKQTVEGQGHTVHWAALLILAVIIPTIGGNILVILAVALEKRLQYATNYFLMSLAIADLLVGLFVMPIALLTIMFEAIWPLPLALCPAWLFLDVLFSTASIMHLCAISLDRYIAIKKPIQANQCNSRATAFIKITVVWLISIGIAIPVPIKGIETDVINPHNVTCELTKDRFGSFMVFGSLAAFFAPLTIMVVTYFLTIHTLQKKAYLVKNKPPQRLTRWTVPTVFLREDSSFSSPEKVAMLDGSHRDKILPNSSDETLMRRMSSVGKRSAQTISNEQRASKALGVVFFLFLLMWCPFFITNLTLALCDSCNQTTLKTLLEIFVWIGYVSSGVNPLIYTLFNKTFREAFGRYITCNYRATKSVKALRKFSSTLCFGNSMVENSKFFTKHGIRNGINPAMYQSPMRLRSSTIQSSSIILLDTLLTENDGDKAEEQVSYI.

The Extracellular segment spans residues 1–55; that stretch reads MASSYKMSEQSTTSEHILQKTCDHLILTNRSGLETDSVAEEMKQTVEGQGHTVHW. Asparagine 29 carries N-linked (GlcNAc...) asparagine glycosylation. A helical membrane pass occupies residues 56–78; sequence AALLILAVIIPTIGGNILVILAV. At 79-89 the chain is on the cytoplasmic side; sequence ALEKRLQYATN. A helical transmembrane segment spans residues 90-112; that stretch reads YFLMSLAIADLLVGLFVMPIALL. The Extracellular segment spans residues 113 to 128; sequence TIMFEAIWPLPLALCP. Residues cysteine 127 and cysteine 206 are joined by a disulfide bond. The helical transmembrane segment at 129-150 threads the bilayer; it reads AWLFLDVLFSTASIMHLCAISL. Residues aspartate 134 and threonine 139 each contribute to the ergotamine site. The DRY motif; important for ligand-induced conformation changes motif lies at 151-153; the sequence is DRY. The Cytoplasmic segment spans residues 151 to 170; that stretch reads DRYIAIKKPIQANQCNSRAT. Residues 171–191 traverse the membrane as a helical segment; that stretch reads AFIKITVVWLISIGIAIPVPI. The Extracellular portion of the chain corresponds to 192–215; sequence KGIETDVINPHNVTCELTKDRFGS. Leucine 208 contributes to the ergotamine binding site. A [DE]RFG motif; may stabilize a conformation that preferentially activates signaling via beta-arrestin family members motif is present at residues 211-214; sequence DRFG. A helical membrane pass occupies residues 216–238; the sequence is FMVFGSLAAFFAPLTIMVVTYFL. The Cytoplasmic segment spans residues 239–323; it reads TIHTLQKKAY…TISNEQRASK (85 aa). The helical transmembrane segment at 324-344 threads the bilayer; the sequence is ALGVVFFLFLLMWCPFFITNL. Topologically, residues 345-359 are extracellular; the sequence is TLALCDSCNQTTLKT. Cysteine 349 and cysteine 352 are joined by a disulfide. A helical membrane pass occupies residues 360–381; that stretch reads LLEIFVWIGYVSSGVNPLIYTL. Residues 375-379 carry the NPxxY motif; important for ligand-induced conformation changes and signaling motif; the sequence is NPLIY. Residues 382-479 lie on the Cytoplasmic side of the membrane; it reads FNKTFREAFG…DKAEEQVSYI (98 aa). Cysteine 396 carries S-palmitoyl cysteine lipidation. The short motif at 477–479 is the PDZ-binding element; sequence SYI.

The protein belongs to the G-protein coupled receptor 1 family. In terms of assembly, interacts (via C-terminus) with MPDZ. In terms of tissue distribution, ubiquitous. Detected in intestine, heart, skeletal muscle, testis, urinary bladder, stomach, liver, lung, brain and kidney. Detected in osteoblasts. Detected in the raphe nucleus in the brain, in dorsal root ganglion neurons, the brain stem, cerebellum and spinal cord. Detected in interstitial cells of Cajal in the small intestine.

Its subcellular location is the cell membrane. It localises to the synapse. It is found in the synaptosome. In terms of biological role, G-protein coupled receptor for 5-hydroxytryptamine (serotonin). Also functions as a receptor for various ergot alkaloid derivatives and psychoactive substances. Ligand binding causes a conformation change that triggers signaling via guanine nucleotide-binding proteins (G proteins) and modulates the activity of downstream effectors. HTR2B is coupled to G(q)/G(11) G alpha proteins and activates phospholipase C-beta, releasing diacylglycerol (DAG) and inositol 1,4,5-trisphosphate (IP3) second messengers that modulate the activity of phosphatidylinositol 3-kinase and promote the release of Ca(2+) ions from intracellular stores, respectively. Beta-arrestin family members inhibit signaling via G proteins and mediate activation of alternative signaling pathways. Plays a role in the regulation of dopamine and 5-hydroxytryptamine release, 5-hydroxytryptamine uptake and in the regulation of extracellular dopamine and 5-hydroxytryptamine levels, and thereby affects neural activity. May play a role in the perception of pain. Plays a role in the regulation of behavior, including impulsive behavior. Required for normal proliferation of embryonic cardiac myocytes and normal heart development. Protects cardiomyocytes against apoptosis. Plays a role in the adaptation of pulmonary arteries to chronic hypoxia. Plays a role in vasoconstriction. Required for normal osteoblast function and proliferation, and for maintaining normal bone density. Required for normal proliferation of the interstitial cells of Cajal in the intestine. This chain is 5-hydroxytryptamine receptor 2B (Htr2b), found in Mus musculus (Mouse).